The sequence spans 305 residues: MDVSIDFAGLKLKNPILTASGTFGFGLEFQRYGDLESLGGIVVKGLSLKPREGNPMPRIAETPCGMLNAIGIQNPGVEEFINKKLPKLPWKTLPVLANLYATDAEEFGELAGVLAGEEGVAALEVNVSCPNVKEGGIAFGQDPKQITKVAEAVKKNAGNKPIIIKLSPNVTDITVCAKAAEDGGADALSLINTLSGMAVDIERRTPRLANVIGGLSGPAVKPVALRCVYQTVNAVKIPVMGLGGITTAEDAAEFLLVGAKAVQIGTGNFLSPDTAFRIAEELPKVLERVKAESLDEFIGSLKLPK.

FMN is bound by residues Ser20 and 44–45 (KG). Substrate contacts are provided by residues Lys44 and 68-72 (NAIGI). Residues Asn98 and Asn126 each coordinate FMN. Substrate is bound at residue Asn126. Residue Cys129 is the Nucleophile of the active site. FMN contacts are provided by Lys165 and Ile191. Residue 192 to 193 (NT) coordinates substrate. Residues Gly217, 243–244 (GG), and 265–266 (GT) each bind FMN.

Belongs to the dihydroorotate dehydrogenase family. Type 1 subfamily. Heterotetramer of 2 PyrK and 2 PyrD type B subunits. FMN serves as cofactor.

It is found in the cytoplasm. It catalyses the reaction (S)-dihydroorotate + NAD(+) = orotate + NADH + H(+). Its pathway is pyrimidine metabolism; UMP biosynthesis via de novo pathway; orotate from (S)-dihydroorotate (NAD(+) route): step 1/1. In terms of biological role, catalyzes the conversion of dihydroorotate to orotate with NAD(+) as electron acceptor. This Maridesulfovibrio salexigens (strain ATCC 14822 / DSM 2638 / NCIMB 8403 / VKM B-1763) (Desulfovibrio salexigens) protein is Dihydroorotate dehydrogenase B (NAD(+)), catalytic subunit (pyrD).